A 717-amino-acid chain; its full sequence is Probable inactive histone-lysine N-methyltransferase SUVR2 (717 aa).

Residues 61 to 73 (QAIQESEEKKADE) show a composition bias toward basic and acidic residues. The disordered stretch occupies residues 61-136 (QAIQESEEKK…LGSPTLEGPS (76 aa)). The span at 120–130 (SALASPSLGSP) shows a compositional bias: low complexity. Positions 445, 446, 449, 453, 462, 529, 533, 535, and 539 each coordinate Zn(2+). Residues 458-547 (MACRCATAFN…NCGNRVVQQG (90 aa)) form the Pre-SET domain. The region spanning 550–679 (NKLQVFFTPN…AMEELTWDYG (130 aa)) is the SET domain. Residues 561–563 (RGW) and 635–636 (NH) contribute to the S-adenosyl-L-methionine site. Cysteine 638 provides a ligand contact to Zn(2+). An S-adenosyl-L-methionine-binding site is contributed by tyrosine 678. Residues 690–706 (SPFHCQCGSDFCRVRKQ) form the Post-SET domain. Residues cysteine 694, cysteine 696, and cysteine 701 each coordinate Zn(2+).

This sequence belongs to the class V-like SAM-binding methyltransferase superfamily. Histone-lysine methyltransferase family. Interacts with SUVR1, CHR19, CHR28 and itself. Interacts with CHR27.

The protein localises to the nucleus. It localises to the chromosome. Its function is as follows. Probable inactive histone-lysine methyltransferase that acts as regulator of transctiptional gene silencing independently of histone H3K9 methylation. Contributes to transcriptional gene silencing at RNA-directed DNA methylation (RdDM) target loci but also at RdDM-independent target loci. Forms a complex with SUVR1 and associates with the SNF2-related chromatin-remodeling proteins CHR19, CHR27, and CHR28, thereby mediating nucleosome positioning and transcriptional silencing. Does not possess histone-lysine methyltransferase activity in vitro, and the conserved catalytic sites of SUVR2 are dispensable for its function in transcriptional gene silencing. The sequence is that of Probable inactive histone-lysine N-methyltransferase SUVR2 (SUVR2) from Arabidopsis thaliana (Mouse-ear cress).